Reading from the N-terminus, the 170-residue chain is 4-hydroxyphenylacetate 3-monooxygenase reductase component (170 aa).

The protein belongs to the non-flavoprotein flavin reductase family. HpaC subfamily. As to quaternary structure, homodimer. 4-HPA 3-monooxygenase consists of a reductase component HpaC and an oxygenase component HpaB.

It carries out the reaction a reduced flavin + NAD(+) = an oxidized flavin + NADH + 2 H(+). Its pathway is aromatic compound metabolism; 4-hydroxyphenylacetate degradation; pyruvate and succinate semialdehyde from 4-hydroxyphenylacetate: step 1/7. Functionally, catalyzes the reduction of free flavins (FMN, FAD and riboflavin) by NADH. Subsequently, the reduced flavins diffuse to the large HpaB component or to other electron acceptors such as cytochrome c and Fe(3+) ion. This is 4-hydroxyphenylacetate 3-monooxygenase reductase component (hpaC) from Escherichia coli.